Reading from the N-terminus, the 301-residue chain is MGARQSRASSKDKGPKRMLFTGRRQKFSPWDDALLSGRDPRSLLKRGMHHVSFSLVTRGMTDIPDFLWGLSEVQKLNLSHNQLRVLPPEVGKLTRIVVLNLCGNRLKSLPREVSLLQCLKVLFVNMNCLTEVPAELSLCRKLEVLSLSHNCLSQLPACFADLSRLRKLNLSNNFFAHIPMCVFSLKELIFLHVGSNRLENIAESIQHLASLQIFIAEGNNIHSFPRSLCLVTSLELLNLNNNDIQTLPSELHLLCRLVRIAWNPMDKGLHISHNPLSKPLPELVEGGLEMLFGYLKDKKHT.

LRR repeat units lie at residues 72 to 93 (EVQK…VGKL), 95 to 116 (RIVV…VSLL), 118 to 139 (CLKV…LSLC), 141 to 163 (KLEV…ADLS), 164 to 185 (RLRK…VFSL), 187 to 208 (ELIF…IQHL), 210 to 231 (SLQI…LCLV), 233 to 254 (SLEL…LHLL), and 265 to 287 (MDKG…VEGG).

This Homo sapiens (Human) protein is Leucine-rich repeat-containing protein 30 (LRRC30).